A 263-amino-acid chain; its full sequence is MYKTKIFYKSGLFLHGRRYIYRKPKETNYWKNYIIVPLYINDKEVGIDKTISEPEYILLDIILYGPLKIKLSEYFNLNNKIIDRTTTYKKLLEKNTIYGINFNFTFPILLNFKDSENKYQLKEYLDFNNILQIYLIENKKYIYRELRSKFDWDEYNVLKIRLYVNHKSVIFIKDKYLEEPTELEYIVLDLFLLGPLEKEYSENYKIIYLINERNKRYKDMYDMGEIYGINIRFDKLDYFKFLNSEYSTEERIYEKILFIYIIT.

The protein belongs to the A.longa ORF167/ORF288 family.

Its subcellular location is the plastid. This is an uncharacterized protein from Euglena longa (Euglenophycean alga).